Reading from the N-terminus, the 137-residue chain is Small ribosomal subunit protein uS12 (137 aa).

Disordered stretches follow at residues 1 to 21 and 34 to 57; these read MPTI…KSDS and VHTK…TPKK. Aspartate 102 carries the 3-methylthioaspartic acid modification.

The protein belongs to the universal ribosomal protein uS12 family. As to quaternary structure, part of the 30S ribosomal subunit. Contacts proteins S8 and S17. May interact with IF1 in the 30S initiation complex.

In terms of biological role, with S4 and S5 plays an important role in translational accuracy. Functionally, interacts with and stabilizes bases of the 16S rRNA that are involved in tRNA selection in the A site and with the mRNA backbone. Located at the interface of the 30S and 50S subunits, it traverses the body of the 30S subunit contacting proteins on the other side and probably holding the rRNA structure together. The combined cluster of proteins S8, S12 and S17 appears to hold together the shoulder and platform of the 30S subunit. The chain is Small ribosomal subunit protein uS12 from Streptococcus equi subsp. zooepidemicus (strain H70).